A 1023-amino-acid polypeptide reads, in one-letter code: MELPGDGVHLASYGPRAPQLAVNGKAPAGGLDGSGYYQCYRDGSSVASRGSDAPTGYDTVDAPPHYDFYANTEVWGRRRRVRPSLYQLSVDPEQDDFKPPMYEETAGERMGGGDSSEEEEEEHKEPPPEPPRFGWVQGVMIRCMLNIWGVILYLRLPWITAQAGIGLTWVIILLSSFITGITGLSTSAIATNGKVKGGGTYFLISRSLGPELGGSIGLIFAFANAVAVAMHTVGFAETVTDLMRENGVVMVDPINDIRIVGVITVTCLLGISMAGMEWESKAQVLFFLVIMVSFVNYIVGTIIPASPQKQAKGFFSYKAEIFAANFVPGWRGKEGSFFGMFSIFFPSATGILAGANISGDLKDPTVAIPRGTLMAIFWTTISYLIISATIGACVVRDASGELNDTLSYSSSSENCSGLACQYRWDFSECIKNNTCKHGIMNYYQSMSLVSAFAPLISAGIFGATLSSALACLVSAPKVFQCLCKDQLYPLIGFFGKGYGKNAEPLRAYLLTYVIAVCFVLIAELNTIAPIISNFFLCSYALINFSCFHASVTNSPGWRPSFRFYSKWLSLLGAVCCVVIMFLLTWWAALIAFGVVFFLLGYTLYKKPAVNWGSSVQASSYSMALNQCVGLNQVEDHVKNYRPQCLVLTGPPCCRPALVDLVGCLTKRLSLMMCGHVVTAGPSPVSERHVTWLNQRKVRSFYRGVVAADLRSGVNMLLQGAGLGRIKPNVLLMGFKKDWGCDSPQAAHHYIGILHDAFDLHYGVCVLRVKEGLDASHPPQCHVNPGFDGGPESINTVCAPACVQTSVTSSVSMDPDPQPSSVFQKKQGKKTIDIYWLSDDGGLTLLLPYLLTRRKRWAGCKVRVFVGGDTDKKEEQKEEVLALIKKFRLGFHDVEVLPDIHQPPQPGNVDHFEDSVNRFRLETNPKQDSDSGPQQQQQEEPWMITEQDLERNRAKSLRQIRLNEVLQVHSREAALIVITMPVGRRGVCPSTLFLAWLDVLSRDLRPPVLLVRGNQENVLTFYCQ.

Residues 1–134 (MELPGDGVHL…EPPPEPPRFG (134 aa)) are Cytoplasmic-facing. Residues 91 to 131 (DPEQDDFKPPMYEETAGERMGGGDSSEEEEEEHKEPPPEPP) form a disordered region. Residues 135 to 164 (WVQGVMIRCMLNIWGVILYLRLPWITAQAG) traverse the membrane as a discontinuously helical segment. L145 and W148 together coordinate Na(+). A helical transmembrane segment spans residues 165 to 186 (IGLTWVIILLSSFITGITGLST). The Cytoplasmic portion of the chain corresponds to 187-217 (SAIATNGKVKGGGTYFLISRSLGPELGGSIG). A helical transmembrane segment spans residues 218–240 (LIFAFANAVAVAMHTVGFAETVT). Residues 241–252 (DLMRENGVVMVD) are Extracellular-facing. A run of 2 helical transmembrane segments spans residues 253–277 (PIND…AGME) and 278–300 (WESK…YIVG). The Extracellular segment spans residues 301 to 335 (TIIPASPQKQAKGFFSYKAEIFAANFVPGWRGKEG). Residues 336–357 (SFFGMFSIFFPSATGILAGANI) traverse the membrane as a discontinuously helical segment. Residues G350, I351, and L352 each coordinate chloride. Topologically, residues 358-368 (SGDLKDPTVAI) are cytoplasmic. The helical transmembrane segment at 369–390 (PRGTLMAIFWTTISYLIISATI) threads the bilayer. The Extracellular portion of the chain corresponds to 391–452 (GACVVRDASG…YQSMSLVSAF (62 aa)). 2 N-linked (GlcNAc...) asparagine glycosylation sites follow: N403 and N414. Intrachain disulfides connect C415–C420 and C429–C435. N432 carries N-linked (GlcNAc...) asparagine glycosylation. A helical transmembrane segment spans residues 453 to 476 (APLISAGIFGATLSSALACLVSAP). Na(+) is bound by residues A463, S466, and S467. The Cytoplasmic portion of the chain corresponds to 477–506 (KVFQCLCKDQLYPLIGFFGKGYGKNAEPLR). The helical transmembrane segment at 507–521 (AYLLTYVIAVCFVLI) threads the bilayer. The Extracellular portion of the chain corresponds to 522–526 (AELNT). The chain crosses the membrane as a helical span at residues 527 to 543 (IAPIISNFFLCSYALIN). Y539 is a chloride binding site. Topologically, residues 544 to 566 (FSCFHASVTNSPGWRPSFRFYSK) are cytoplasmic. The next 2 helical transmembrane spans lie at 567 to 586 (WLSL…LTWW) and 587 to 598 (AALIAFGVVFFL). Residues 599 to 1023 (LGYTLYKKPA…QENVLTFYCQ (425 aa)) lie on the Cytoplasmic side of the membrane. The interval 614-629 (SVQASSYSMALNQCVG) is scissor helix. Positions 647, 654, 676, 733, and 772 each coordinate ATP.

Belongs to the SLC12A transporter family. Homodimer; adopts a domain-swap conformation at the scissor helices connecting the transmembrane domain and C-terminal domain. Expressed in urinary bladder, intestine, ovary, skeletal muscle, eye, brain, and kidney.

The protein localises to the cell membrane. It catalyses the reaction chloride(out) + Na(+)(out) = chloride(in) + Na(+)(in). Its activity is regulated as follows. Inhibited by thiazide-type diuretics including polythiazide, metolazone, cyclothiazide, hydrochlorothiazide and chlorthalidone. Thiazide drugs, specifically inhibit SLC12A3/NCC transporter activity by competing with chloride for binding. Its function is as follows. Electroneutral sodium and chloride ion cotransporter, with a coupling ratio 1 Na(+):1 Cl(-). Mediates sodium and chloride reabsorption. In Pseudopleuronectes americanus (Winter flounder), this protein is Solute carrier family 12 member 3 (slc12a3).